The sequence spans 522 residues: Nuclear pore glycoprotein p62 (522 aa).

Residue S2 is modified to N-acetylserine. Repeat copies occupy residues 6–7 (FG), 44–45 (FG), 76–77 (FG), 114–115 (FG), and 142–143 (FG). The tract at residues 6-143 (FGGTGAPTGG…GTAPTGFVFG (138 aa)) is 5 X 2 AA repeats of F-G. Over residues 169 to 179 (SGFNIGSAGNS) the composition is skewed to polar residues. Disordered stretches follow at residues 169–215 (SGFN…ATIT) and 260–288 (APGAASGTSTTTSTAATATATTTSSSSTT). Low complexity-rich tracts occupy residues 180 to 215 (AQPTAPATLPFTPATPAATTAGATQPAAPTPTATIT) and 262 to 288 (GAASGTSTTTSTAATATATTTSSSSTT). Residues 328–458 (MTYAQLESLI…QDLKDIIEHL (131 aa)) are required for centrosome localization. The stretch at 328–458 (MTYAQLESLI…QDLKDIIEHL (131 aa)) forms a coiled coil. O-linked (GlcNAc) threonine glycosylation occurs at T373. S408 and S418 each carry phosphoserine. O-linked (GlcNAc) serine glycosylation is present at S468.

It belongs to the nucleoporin NSP1/NUP62 family. In terms of assembly, component of the p62 complex, a complex at least composed of NUP62, NUP54, and NUP58. Interacts with NUP88. Interacts with NUTF2. Interacts with HIKESHI. Interacts with OSBPL8. Interacts with CAPG. Interacts with SAS6 and TUBG1 at the centrosome. Interacts with MCM3AP isoform GANP. (Microbial infection) Interacts with Epstein-barr virus BGLF4; this interaction allows BGLF4 nuclear entry. Post-translationally, O-glycosylated. Contains about 10 N-acetylglucosamine side chain sites predicted for the entire protein, among which only one in the C-terminal. The inner channel of the NPC has a different redox environment from the cytoplasm and allows the formation of interchain disulfide bonds between some nucleoporins, the significant increase of these linkages upon oxidative stress reduces the permeability of the NPC.

It is found in the nucleus. The protein localises to the nuclear pore complex. Its subcellular location is the cytoplasm. The protein resides in the cytoskeleton. It localises to the spindle pole. It is found in the nucleus envelope. The protein localises to the microtubule organizing center. Its subcellular location is the centrosome. Essential component of the nuclear pore complex. The N-terminal is probably involved in nucleocytoplasmic transport. The C-terminal is involved in protein-protein interaction probably via coiled-coil formation, promotes its association with centrosomes and may function in anchorage of p62 to the pore complex. Plays a role in mitotic cell cycle progression by regulating centrosome segregation, centriole maturation and spindle orientation. It might be involved in protein recruitment to the centrosome after nuclear breakdown. In Homo sapiens (Human), this protein is Nuclear pore glycoprotein p62 (NUP62).